The chain runs to 449 residues: Putative F-box/LRR-repeat protein 23 (449 aa).

LRR repeat units lie at residues 14 to 37 (KLWR…HLKL) and 39 to 64 (GNGL…DLRR). The region spanning 178–225 (LRNWAELPSKLTSSILLRLGAIEILQNAQKVCKPWHRVCKDPSMWRKI) is the F-box domain. LRR repeat units lie at residues 261 to 286 (WYYG…GLVR), 287 to 311 (CFPI…LEVS), 312 to 337 (YCLF…KLNR), 344 to 367 (SNSG…HLQL), 369 to 394 (GNGL…DLRQ), and 401 to 427 (VGDL…DSDD).

The polypeptide is Putative F-box/LRR-repeat protein 23 (FBL23) (Arabidopsis thaliana (Mouse-ear cress)).